Reading from the N-terminus, the 607-residue chain is Acyl-coenzyme A thioesterase 11 (607 aa).

A mitochondrion-targeting transit peptide spans 1–13 (MIQNVGNHLRRGL). Phosphoserine occurs at positions 15 and 25. In terms of domain architecture, HotDog ACOT-type 1 spans 43–155 (NPTEVQMSQL…LATFVARREI (113 aa)). CoA is bound by residues 91 to 93 (TAS), 120 to 122 (NSS), R181, and 271 to 273 (HFR). Residues 216-329 (EKTRVESVEL…FMTFVVLDAD (114 aa)) form the HotDog ACOT-type 2 domain. One can recognise an START domain in the interval 375-585 (LSVPWDPSNQ…GWNGKLAGGH (211 aa)).

In terms of tissue distribution, isoform 1 is predominantly expressed in skeletal muscle, liver, testis, stomach, spleen, lung and brain. Isoform 2 is predominantly expressed in kidney, uterus, hibernoma and white adipose tissue.

It localises to the mitochondrion matrix. Its subcellular location is the cytoplasm. The catalysed reaction is hexadecanoyl-CoA + H2O = hexadecanoate + CoA + H(+). The enzyme catalyses tetradecanoyl-CoA + H2O = tetradecanoate + CoA + H(+). It catalyses the reaction dodecanoyl-CoA + H2O = dodecanoate + CoA + H(+). It carries out the reaction butanoyl-CoA + H2O = butanoate + CoA + H(+). The protein operates within lipid metabolism; fatty acid metabolism. Functionally, has an acyl-CoA thioesterase activity with a preference for the long chain fatty acyl-CoA thioesters hexadecanoyl-CoA/palmitoyl-CoA and tetradecanoyl-CoA/myristoyl-CoA which are the main substrates in the mitochondrial beta-oxidation pathway. This chain is Acyl-coenzyme A thioesterase 11 (ACOT11), found in Homo sapiens (Human).